A 367-amino-acid polypeptide reads, in one-letter code: Glutamate 5-kinase (367 aa).

Lysine 10 contacts ATP. Residues serine 50, aspartate 137, and asparagine 149 each coordinate substrate. ATP-binding positions include 169-170 (TD) and 211-217 (TGGMSTK). The region spanning 275–353 (AGEITVDEGA…QEIDAILGYE (79 aa)) is the PUA domain.

It belongs to the glutamate 5-kinase family.

Its subcellular location is the cytoplasm. The catalysed reaction is L-glutamate + ATP = L-glutamyl 5-phosphate + ADP. Its pathway is amino-acid biosynthesis; L-proline biosynthesis; L-glutamate 5-semialdehyde from L-glutamate: step 1/2. Catalyzes the transfer of a phosphate group to glutamate to form L-glutamate 5-phosphate. The polypeptide is Glutamate 5-kinase (Escherichia fergusonii (strain ATCC 35469 / DSM 13698 / CCUG 18766 / IAM 14443 / JCM 21226 / LMG 7866 / NBRC 102419 / NCTC 12128 / CDC 0568-73)).